A 202-amino-acid polypeptide reads, in one-letter code: Dephospho-CoA kinase (202 aa).

Positions 6–202 (KISVTGDPSS…QCFKALKGTI (197 aa)) constitute a DPCK domain. 14–19 (SSGKTE) provides a ligand contact to ATP.

The protein belongs to the CoaE family.

The protein localises to the cytoplasm. The enzyme catalyses 3'-dephospho-CoA + ATP = ADP + CoA + H(+). Its pathway is cofactor biosynthesis; coenzyme A biosynthesis; CoA from (R)-pantothenate: step 5/5. Its function is as follows. Catalyzes the phosphorylation of the 3'-hydroxyl group of dephosphocoenzyme A to form coenzyme A. This chain is Dephospho-CoA kinase, found in Chlamydia trachomatis serovar A (strain ATCC VR-571B / DSM 19440 / HAR-13).